An 804-amino-acid polypeptide reads, in one-letter code: Elongation factor G, mitochondrial (804 aa).

The transit peptide at 1–63 (MSMHRVARAV…RHFSQSPIIR (63 aa)) directs the protein to the mitochondrion. The tr-type G domain occupies 99 to 385 (RRVRNIGIAA…AVCDYLPNPA (287 aa)). GTP-binding positions include 108 to 115 (AHIDSGKT), 183 to 187 (DTPGH), and 237 to 240 (NKMD).

Belongs to the TRAFAC class translation factor GTPase superfamily. Classic translation factor GTPase family. EF-G/EF-2 subfamily.

It is found in the mitochondrion. Its pathway is protein biosynthesis; polypeptide chain elongation. In terms of biological role, mitochondrial GTPase that catalyzes the GTP-dependent ribosomal translocation step during translation elongation. During this step, the ribosome changes from the pre-translocational (PRE) to the post-translocational (POST) state as the newly formed A-site-bound peptidyl-tRNA and P-site-bound deacylated tRNA move to the P and E sites, respectively. Catalyzes the coordinated movement of the two tRNA molecules, the mRNA and conformational changes in the ribosome. In Botryotinia fuckeliana (strain B05.10) (Noble rot fungus), this protein is Elongation factor G, mitochondrial (mef1).